The sequence spans 925 residues: Centrosomal protein of 104 kDa (925 aa).

A coiled-coil region spans residues 209-289 (EVAQIIRKLD…RAEVYEQLEL (81 aa)). 2 HEAT repeats span residues 529 to 567 (TIPV…LQII) and 604 to 640 (GFTI…YRQH). The stretch at 677-725 (DAEMRARRKAATEEAEKQKKEEIKALQGQLAALKEIQAEVQEKESDAVK) forms a coiled coil. The disordered stretch occupies residues 883 to 925 (PALQPGKSSAVAASGPLGSKAGSKIPTPKGGLSKSSSRTYAKR). Polar residues predominate over residues 915-925 (SKSSSRTYAKR).

As to quaternary structure, interacts with CCP110 and CEP97. Interacts with ARMC9, TOGARAM1, CCDC66 and CSPP1.

The protein resides in the cell projection. The protein localises to the cilium. It localises to the cytoplasm. It is found in the cytoskeleton. Its subcellular location is the microtubule organizing center. The protein resides in the centrosome. The protein localises to the centriole. It localises to the spindle pole. Required for ciliogenesis and for structural integrity at the ciliary tip. This chain is Centrosomal protein of 104 kDa (CEP104), found in Homo sapiens (Human).